A 334-amino-acid chain; its full sequence is BTB and MATH domain-containing protein 39 (334 aa).

The MATH domain occupies 14-141 (IVTLVFNIYN…EGRFQIEFDL (128 aa)). The BTB domain occupies 164–229 (ADGELITDGK…LQLDSFEVSV (66 aa)).

The chain is BTB and MATH domain-containing protein 39 (bath-39) from Caenorhabditis elegans.